The primary structure comprises 1045 residues: MDIS1-interacting receptor like kinase 2 (1045 aa).

Positions 1–43 (MNKTNPERKISLTSFKERMACKEKPRDLQVLLIISIVLSCSFA) are cleaved as a signal peptide. The Extracellular portion of the chain corresponds to 44–709 (VSATVEEANA…SKKSHKDRNL (666 aa)). N-linked (GlcNAc...) asparagine glycans are attached at residues N63, N77, N99, and N119. LRR repeat units follow at residues 92–116 (LGSI…PFSS), 117–140 (LPNL…LWGR), 141–165 (FSKL…LGDL), 166–189 (SNLD…IGRL), 191–212 (KVTE…SFGN), 213–237 (LTKL…IGNL), 238–260 (PNLR…SFGN), 262–285 (KNVT…IGNM), 286–309 (TALD…LGNI), 311–333 (TLAV…LGEM), 334–356 (ESMI…SFGK), 357–381 (LTAL…IANS), 383–405 (ELTV…ICRG), 406–429 (GKLE…LRDC), 431–452 (SLIR…AFGV), 453–476 (YPTL…NWEQ), 477–501 (SQKL…IWNM), 502–525 (TQLS…ISNI), 527–549 (RISK…IRLL), 550–573 (TNLE…LNNL), 575–597 (RLYY…LTKL), 598–620 (SQLQ…QFRS), 621–644 (LQNL…SFKD), and 646–670 (LALT…AFRN). 2 N-linked (GlcNAc...) asparagine glycosylation sites follow: N179 and N212. Residues N249, N263, and N284 are each glycosylated (N-linked (GlcNAc...) asparagine). The N-linked (GlcNAc...) asparagine glycan is linked to N323. Residues N380, N393, and N410 are each glycosylated (N-linked (GlcNAc...) asparagine). N-linked (GlcNAc...) asparagine glycans are attached at residues N487 and N500. N-linked (GlcNAc...) asparagine glycosylation occurs at N580. N633 is a glycosylation site (N-linked (GlcNAc...) asparagine). N-linked (GlcNAc...) asparagine glycosylation occurs at N687. A helical membrane pass occupies residues 710–730 (IIYILVPIIGAIIILSVCAGI). The Cytoplasmic portion of the chain corresponds to 731–1045 (FICFRKRTKQ…TMLSISTAFS (315 aa)). T772 carries the phosphothreonine modification. One can recognise a Protein kinase domain in the interval 775 to 1045 (FDPKYLIGTG…TMLSISTAFS (271 aa)). ATP is bound by residues 781–789 (IGTGGHGKV) and K802. Y853 and Y892 each carry phosphotyrosine. Residue D905 is the Proton acceptor of the active site. S938 carries the phosphoserine modification. Y946 and Y953 each carry phosphotyrosine.

Belongs to the protein kinase superfamily. Ser/Thr protein kinase family. In terms of assembly, interacts with MDIS1 and LURE1.2. Binds to SCOOP12; this interaction triggers the formation of complex between MIK2 and the BAK1/SERK3 and SERK4 coreceptors. Expressed in pollen tubes. Highly expressed in shoots, roots and leaves.

Its subcellular location is the cell membrane. It carries out the reaction L-seryl-[protein] + ATP = O-phospho-L-seryl-[protein] + ADP + H(+). The catalysed reaction is L-threonyl-[protein] + ATP = O-phospho-L-threonyl-[protein] + ADP + H(+). Functionally, acts as a receptor of SCOOP peptides from Brassicaceae plants regulating multiple processing including plant growth, development and stress responses. Perception of SCOOP peptides induces the association of MIK2 with the coreceptors BAK1/SERK3 and SERK4 and relays the signaling through the activation of receptor-like cytosolic kinases (RLCKs) BIK1 and PBL1. Also able to detect SCOOP-like proteins (SCOOPL) present in fungal Fusarium spp. and bacterial Comamonadaceae to elicit various immune responses, including growth inhibition, ROS production, calcium Ca(2+) influx, MAPK activation and MYB51 promoter activation in roots, thus being required for resistance to several root pathogens. Involved in the pollen tube perception of the female signal. Required to trigger defense responses toward generalist herbivores such as Spodoptera littoralis, probably via the activation of jasmonate and indole glucosinolate biosynthesis. The sequence is that of MDIS1-interacting receptor like kinase 2 from Arabidopsis thaliana (Mouse-ear cress).